The primary structure comprises 247 residues: uncharacterized protein (247 aa).

This is an uncharacterized protein from Cryphonectria parasitica (Chestnut blight fungus).